A 210-amino-acid polypeptide reads, in one-letter code: Outer-membrane lipoprotein LolB (210 aa).

A signal peptide spans 1–29; that stretch reads MSLISNNEERSLRVRYCIAIALSALLISG. C30 is lipidated: N-palmitoyl cysteine. C30 carries the S-diacylglycerol cysteine lipid modification.

This sequence belongs to the LolB family. As to quaternary structure, monomer.

The protein localises to the cell outer membrane. In terms of biological role, plays a critical role in the incorporation of lipoproteins in the outer membrane after they are released by the LolA protein. This is Outer-membrane lipoprotein LolB from Coxiella burnetii (strain RSA 493 / Nine Mile phase I).